Here is a 443-residue protein sequence, read N- to C-terminus: Glutamate-1-semialdehyde 2,1-aminomutase (443 aa).

K272 is modified (N6-(pyridoxal phosphate)lysine).

This sequence belongs to the class-III pyridoxal-phosphate-dependent aminotransferase family. HemL subfamily. Homodimer. Pyridoxal 5'-phosphate is required as a cofactor.

The protein resides in the cytoplasm. It catalyses the reaction (S)-4-amino-5-oxopentanoate = 5-aminolevulinate. The protein operates within porphyrin-containing compound metabolism; protoporphyrin-IX biosynthesis; 5-aminolevulinate from L-glutamyl-tRNA(Glu): step 2/2. It functions in the pathway porphyrin-containing compound metabolism; chlorophyll biosynthesis. This is Glutamate-1-semialdehyde 2,1-aminomutase from Chloroflexus aurantiacus (strain ATCC 29366 / DSM 635 / J-10-fl).